The following is a 333-amino-acid chain: MGKVILGIETSCDETAVSLVEDGRKVLISLLSSQVDLHRLYGGVVPEIASRRHLELIFPLLDEAFRKFPREKIAAVAVTYGPGLVGALLVGLSVAKSLSYALNVPLIGVNHMEGHIFANFLEDANPVFPALVLVVSGGHTDLIFMRGFGDYELLGETIDDAAGECFDKVGRVLNLPYPAGPVIDRLSKKGKPIYKFPVARLKEEGYNFSFSGLKTAVRVFREKNPEAKVEDIAASFQEALVRALVENTEKALKECMPAKLYLAGGVAANSRLREEFLNLGKTYNVPVHFPSLQYCTDNAAMIAAAGYHRYLSGKYAPLNLNAYPSLMLGEERY.

Fe cation is bound by residues His111 and His115. Substrate-binding positions include 134-138 (VVSGG), Asp167, Gly180, Asp184, and Asn269. Asp297 is a Fe cation binding site.

The protein belongs to the KAE1 / TsaD family. Fe(2+) serves as cofactor.

It localises to the cytoplasm. The catalysed reaction is L-threonylcarbamoyladenylate + adenosine(37) in tRNA = N(6)-L-threonylcarbamoyladenosine(37) in tRNA + AMP + H(+). Its function is as follows. Required for the formation of a threonylcarbamoyl group on adenosine at position 37 (t(6)A37) in tRNAs that read codons beginning with adenine. Is involved in the transfer of the threonylcarbamoyl moiety of threonylcarbamoyl-AMP (TC-AMP) to the N6 group of A37, together with TsaE and TsaB. TsaD likely plays a direct catalytic role in this reaction. The protein is tRNA N6-adenosine threonylcarbamoyltransferase of Carboxydothermus hydrogenoformans (strain ATCC BAA-161 / DSM 6008 / Z-2901).